Consider the following 745-residue polypeptide: MASLVTLPAIAFSNPATASGAVRLRAAAFRCWALRRRGWAVAAAVASPNSVLSEHAFKRLQLGSDDEDEEGPYGSDADEGFQGDEEELAIARLGLPDELVATLEKRGITHLFPIQRAVLIPALGGRDLIARAKTGTGKTLAFGIPMIKQLMEQDDGRSTRRGRTPRVLVLAPTRELAKQVEKEIKESAPKLGTVCVYGGVSYNVQQNALSRGVDVVVGTPGRIIDLINGGSLQLGEVQYLVLDEADQMLAVGFEEDVETILQQLPADRQSMLFSATMPSWVKKLSRRYLNNPLTIDLVGDQDEKLAEGIKLHAIPLTATSKRTILSDLITVYAKGGKTIVFTRTKKDADEVSLALTTSIASEALHGDISQHQRERTLNGFRQGKFTVLVATDVAARGLDIPNVDLIIHYELPNDPETFVHRSGRTGRAGKAGTAILMFTSSQKRTVMSLERDVGCKFEFISPPSIEEVLESSAEHVIATLRGVHPESTQYFLGAAEKLTEELGPHALASALAHLSGFSQPPSSRSLISYEQGWVTLQLTREPGYGRGFFSPRSVTGFLSDVCSAAADEVGKIYITADENVQGAVFDLPEEIAKDLLTMEVPPGNTLTKISKLPALQDDSPATDSYGRFSNDRGSRNRRSRGGGASRGRGGWDTDSEDRYRRGGRSLRSDNDSWSDDDWSGGGRKSNRSSSSFGGRSSSYGSRGSPSPSFGVRSSSLGGRESSRSFSGACFNCGESGHRASDCPNK.

The N-terminal 41 residues, 1 to 41, are a transit peptide targeting the chloroplast; it reads MASLVTLPAIAFSNPATASGAVRLRAAAFRCWALRRRGWAV. Positions 88 to 116 match the Q motif motif; it reads LAIARLGLPDELVATLEKRGITHLFPIQR. Residues 119 to 295 form the Helicase ATP-binding domain; it reads LIPALGGRDL…RRYLNNPLTI (177 aa). Residue 132-139 coordinates ATP; it reads AKTGTGKT. Positions 243–246 match the DEAD box motif; it reads DEAD. Residues 324-469 form the Helicase C-terminal domain; sequence ILSDLITVYA…ISPPSIEEVL (146 aa). The disordered stretch occupies residues 606–724; the sequence is LTKISKLPAL…SLGGRESSRS (119 aa). Residues 641 to 650 show a composition bias toward gly residues; the sequence is GGGASRGRGG. Positions 656 to 670 are enriched in basic and acidic residues; that stretch reads EDRYRRGGRSLRSDN. Positions 687–724 are enriched in low complexity; that stretch reads RSSSSFGGRSSSYGSRGSPSPSFGVRSSSLGGRESSRS. The CCHC-type zinc-finger motif lies at 727 to 744; sequence GACFNCGESGHRASDCPN.

Belongs to the DEAD box helicase family. DDX21/DDX50 subfamily.

The protein resides in the plastid. It is found in the chloroplast. It catalyses the reaction ATP + H2O = ADP + phosphate + H(+). Its function is as follows. Nuclear genome-encoded factor involved in ribosome biogenesis in chloroplasts. Binds specific group II introns in chloroplasts and facilitates their splicing. Required for normal development of chloroplasts. This Zea mays (Maize) protein is DEAD-box ATP-dependent RNA helicase 3A, chloroplastic.